Consider the following 1759-residue polypeptide: MSRLSLLGLTAAVVLLSSFCQDRIHVDAAAACKGCAPPCVCPGTKGERGNPGFGGEPGHPGAPGQDGPEGAPGAPGMFGAEGDFGDMGSKGARGDRGLPGSPGHPGLQGLDGLPGLKGEEGIPGCNGTDGFPGMPGLAGPPGQSGQNGNPGRPGLSGPPGEGGVNSQGRKGVKGESGRSGVPGLPGNSGYPGLKGAKGDPGPYGLPGFPGVSGLKGRMGVRTSGVKGEKGLPGPPGPPGQPGSYPWASKPIEMEVLQGPVGPAGVKGEKGRDGPVGPPGMLGLDGPPGYPGLKGQKGDLGDAGQRGKRGKDGVPGNYGEKGSQGEQGLGGTPGYPGTKGGAGEPGYPGRPGFEGDCGPEGPLGEGTGEAGPHGAQGFDGVQGGKGLPGHDGLPGPVGPRGPVGAPGAPGQPGIDGMPGYTEKGDRGEDGYPGFAGEPGLPGEPGDCGYPGEDGLPGYDIQGPPGLDGQSGRDGFPGIPGDIGDPGYSGEKGFPGTGVNKVGPPGMTGLPGEPGMPGRIGVDGYPGPPGNNGERGEDCGYCPDGVPGNAGDPGFPGMNGYPGPPGPNGDHGDCGMPGAPGKPGSAGSDGLSGSPGLPGIPGYPGMKGEAGEIVGPMENPAGIPGLKGDHGLPGLPGRPGSDGLPGYPGGPGQNGFPGLQGEPGLAGIDGKRGRQGSLGIPGLQGPPGDSFPGQPGTPGYKGERGADGLPGLPGAQGPRGIPAPLRIVNQVAGQPGVDGMPGLPGDRGADGLPGLPGPVGPDGYPGTPGERGMDGLPGFPGLHGEPGMRGQQGEVGFNGIDGDCGEPGLDGYPGAPGAPGAPGETGFGFPGQVGYPGPNGDAGAAGLPGPDGYPGRDGLPGTPGYPGEAGMNGQDGAPGQPGSRGESGLVGIDGKKGRDGTPGTRGQDGGPGYSGEAGAPGQNGMDGYPGAPGDQGYPGSPGQDGYPGPSGIPGEDGLVGFPGLRGEHGDNGLPGLEGECGEEGSRGLDGVPGYPGEHGTDGLPGLPGADGQPGFVGEAGEPGTPGYRGQPGEPGNLAYPGQPGDVGYPGPDGPPGLPGQDGLPGLNGERGDNGDSYPGNPGLSGQPGDAGYDGLDGVPGPPGYPGITGMPGLKGESGLPGLPGRQGNDGIPGQPGLEGECGEDGFPGSPGQPGYPGQQGREGEKGYPGIPGENGLPGLRGQDGQPGLKGENGLDGQPGYPGSAGQLGTPGDVGYPGAPGENGDNGNQGRDGQPGLRGESGQPGQPGLPGRDGQPGPVGPPGDDGYPGAPGQDIYGPPGQAGQDGYPGLDGLPGAPGLNGEPGSPGQYGMPGLPGGPGESGLPGYPGERGLPGLDGKRGHDGLPGAPGVPGVEGVPGLEGDCGEDGYPGAPGAPGSNGYPGERGLPGVPGQQGRSGDNGYPGAPGQPGIKGPRGDDGFPGRDGLDGLPGRPGREGLPGPMAMAVRNPPGQPGENGYPGEKGYPGLPGDNGLSGPPGKAGYPGAPGTDGYPGPPGLSGMPGHGGDQGFQGAAGRTGNPGLPGTPGYPGSPGGWAPSRGFTFAKHSQTTAVPQCPPGASQLWEGYSLLYVQGNGRASGQDLGQPGSCLSKFNTMPFMFCNMNSVCHVSSRNDYSFWLSTDEPMTPMMNPVTGTAIRPYISRCAVCEVPTQIIAVHSQDTSVPQCPQGWSGMWTGYSFVMHTAAGAEGTGQSLQSPGSCLEEFRAVPFIECHGRGTCNYYATNHGFWLSIVDQDKQFRKPMSQTLKAGGLKDRVSRCQVCLKNR.

A signal peptide spans 1–20 (MSRLSLLGLTAAVVLLSSFC). Positions 21 to 194 (QDRIHVDAAA…PGNSGYPGLK (174 aa)) are cleaved as a propeptide — N-terminal propeptide (7S domain). Disordered regions lie at residues 51–245 (PGFG…GSYP), 269–415 (KGRD…GIDG), 548–596 (AGDP…PGLP), 618–650 (PAGI…GGPG), 666–720 (IDGK…RGIP), and 787–1522 (RGQQ…GTPG). Composition is skewed to low complexity over residues 104–116 (HPGL…LPGL), 140–153 (PPGQ…PGRP), and 278–293 (PGML…PGLK). The triple-helical region stretch occupies residues 195 to 1530 (GAKGDPGPYG…PGYPGSPGGW (1336 aa)). 3 stretches are compositionally biased toward gly residues: residues 324 to 345 (GEQG…GEPG), 360 to 370 (GPLGEGTGEAG), and 379 to 388 (GVQGGKGLPG). 2 stretches are compositionally biased toward low complexity: residues 399 to 411 (RGPV…PGQP) and 574 to 595 (MPGA…SPGL). Over residues 833-848 (YPGPNGDAGAAGLPGP) the composition is skewed to low complexity. Gly residues predominate over residues 904-913 (GQDGGPGYSG). Composition is skewed to low complexity over residues 1037 to 1047 (YPGQPGDVGYP), 1219 to 1232 (ENGD…DGQP), 1247 to 1271 (PGRD…PGQD), and 1281 to 1309 (QDGY…YGMP). Residues 1310–1319 (GLPGGPGESG) are compositionally biased toward gly residues. Residues 1341–1357 (LPGAPGVPGVEGVPGLE) are compositionally biased toward low complexity. The segment covering 1410-1422 (PRGDDGFPGRDGL) has biased composition (basic and acidic residues). Composition is skewed to low complexity over residues 1423-1437 (DGLP…LPGP) and 1472-1482 (PPGKAGYPGAP). A compositionally biased stretch (gly residues) spans 1495–1504 (GMPGHGGDQG). The region spanning 1535–1759 (GFTFAKHSQT…SRCQVCLKNR (225 aa)) is the Collagen IV NC1 domain. 6 disulfide bridges follow: C1550–C1641, C1583–C1638, C1595–C1601, C1660–C1755, C1694–C1752, and C1706–C1712. M1623 participates in a covalent cross-link: S-Lysyl-methionine sulfilimine (Met-Lys) (interchain with K-1741). K1741 is covalently cross-linked (S-Lysyl-methionine sulfilimine (Lys-Met) (interchain with M-1623)).

The protein belongs to the type IV collagen family. Trimers of two alpha 1(IV) and one alpha 2(IV) chain. Type IV collagen forms a mesh-like network linked through intermolecular interactions between 7S domains and between NC1 domains. Post-translationally, prolines at the third position of the tripeptide repeating unit (G-X-Y) are hydroxylated in some or all of the chains. In terms of processing, type IV collagens contain numerous cysteine residues which are involved in inter- and intramolecular disulfide bonding. 12 of these, located in the NC1 domain, are conserved in all known type IV collagens. The trimeric structure of the NC1 domains is stabilized by covalent bonds between Lys and Met residues.

Its subcellular location is the secreted. It localises to the extracellular space. The protein resides in the extracellular matrix. The protein localises to the basement membrane. Its function is as follows. Collagen type IV is specific for basement membranes. Required to restrict presynaptic growth at the neuromuscular junctions (NMJ) in late larval stage and in adult motor neurons. May play a role in axon regeneration in embryos following injury in D-type motor neurons. The protein is Collagen alpha-1(IV) chain of Caenorhabditis elegans.